Here is a 732-residue protein sequence, read N- to C-terminus: X-ray repair cross-complementing protein 5 (732 aa).

Positions Ala-9–Leu-161 constitute a VWFA domain. Residues Leu-138–Leu-165 are leucine-zipper. A Glycyl lysine isopeptide (Lys-Gly) (interchain with G-Cter in SUMO2) cross-link involves residue Lys-195. Residues Ile-253–Ala-453 enclose the Ku domain. Ser-258 is modified (phosphoserine). The residue at position 265 (Lys-265) is an N6-acetyllysine. Ser-318 carries the phosphoserine modification. Position 332 is an N6-acetyllysine (Lys-332). Residues Lys-532 and Lys-534 each participate in a glycyl lysine isopeptide (Lys-Gly) (interchain with G-Cter in SUMO2) cross-link. Position 535 is a phosphothreonine (Thr-535). Residues Lys-567 and Lys-569 each participate in a glycyl lysine isopeptide (Lys-Gly) (interchain with G-Cter in SUMO2) cross-link. Residues Ser-578, Ser-580, and Ser-581 each carry the phosphoserine; by PRKDC modification. The residue at position 666 (Lys-666) is an N6-acetyllysine. Residues Lys-670 and Lys-689 each participate in a glycyl lysine isopeptide (Lys-Gly) (interchain with G-Cter in SUMO2) cross-link. Positions Pro-708–Ile-732 are disordered. Position 716 is a phosphothreonine; by PRKDC (Thr-716). The span at Thr-717 to Ile-732 shows a compositional bias: acidic residues. Residues Glu-720 to Leu-728 carry the EEXXXDL motif motif.

Belongs to the ku80 family. Heterodimer composed of XRCC5/Ku80 and XRCC6/Ku70. Component of the core long-range non-homologous end joining (NHEJ) complex (also named DNA-PK complex) composed of PRKDC, LIG4, XRCC4, XRCC6/Ku70, XRCC5/Ku86 and NHEJ1/XLF. Additional component of the NHEJ complex includes PAXX. Following autophosphorylation, PRKDC dissociates from DNA, leading to formation of the short-range NHEJ complex, composed of LIG4, XRCC4, XRCC6/Ku70, XRCC5/Ku86 and NHEJ1/XLF. The XRCC5-XRCC6 dimer also associates with NAA15, and this complex displays DNA binding activity towards the osteocalcin FGF response element (OCFRE). In addition, XRCC5 binds to the osteoblast-specific transcription factors MSX2 and RUNX2. Interacts with ELF3. Interacts with APLF (via KBM motif). The XRCC5/XRCC6 dimer associates in a DNA-dependent manner with APEX1. Identified in a complex with DEAF1 and XRCC6. Interacts with NR4A3; the DNA-dependent protein kinase complex DNA-PK phosphorylates and activates NR4A3 and prevents NR4A3 ubiquitinylation and degradation. Interacts with RNF138. Interacts with CYREN (via KBM motif). Interacts with WRN (via KBM motif). Interacts (via N-terminus) with HSF1 (via N-terminus); this interaction is direct and prevents XRCC5/XRCC6 heterodimeric binding and non-homologous end joining (NHEJ) repair activities induced by ionizing radiation (IR). Interacts with DHX9; this interaction occurs in a RNA-dependent manner. Part of the HDP-RNP complex composed of at least HEXIM1, PRKDC, XRCC5, XRCC6, paraspeckle proteins (SFPQ, NONO, PSPC1, RBM14, and MATR3) and NEAT1 RNA. Interacts with ERCC6. Interacts with ATF7. The XRCC5-XRCC6 dimer associates with ALKBH2. Interacts with TPRN; TPRN interacts with a number of DNA damage response proteins, is recruited to sites of DNA damage and may play a role in DNA damage repair. Interacts with ERCC6L2. ADP-ribosylated by PARP3. In terms of processing, phosphorylated on serine residues. Phosphorylation by PRKDC may enhance helicase activity. Post-translationally, sumoylated. Ubiquitinated by RNF8 via 'Lys-48'-linked ubiquitination following DNA damage, leading to its degradation and removal from DNA damage sites. Ubiquitinated by RNF138, leading to remove the Ku complex from DNA breaks.

It is found in the nucleus. The protein resides in the nucleolus. The protein localises to the chromosome. Single-stranded DNA-dependent ATP-dependent helicase that plays a key role in DNA non-homologous end joining (NHEJ) by recruiting DNA-PK to DNA. Required for double-strand break repair and V(D)J recombination. Also has a role in chromosome translocation. The DNA helicase II complex binds preferentially to fork-like ends of double-stranded DNA in a cell cycle-dependent manner. It works in the 3'-5' direction. During NHEJ, the XRCC5-XRRC6 dimer performs the recognition step: it recognizes and binds to the broken ends of the DNA and protects them from further resection. Binding to DNA may be mediated by XRCC6. The XRCC5-XRRC6 dimer acts as a regulatory subunit of the DNA-dependent protein kinase complex DNA-PK by increasing the affinity of the catalytic subunit PRKDC to DNA by 100-fold. The XRCC5-XRRC6 dimer is probably involved in stabilizing broken DNA ends and bringing them together. The assembly of the DNA-PK complex to DNA ends is required for the NHEJ ligation step. The XRCC5-XRRC6 dimer probably also acts as a 5'-deoxyribose-5-phosphate lyase (5'-dRP lyase), by catalyzing the beta-elimination of the 5' deoxyribose-5-phosphate at an abasic site near double-strand breaks. XRCC5 probably acts as the catalytic subunit of 5'-dRP activity, and allows to 'clean' the termini of abasic sites, a class of nucleotide damage commonly associated with strand breaks, before such broken ends can be joined. The XRCC5-XRRC6 dimer together with APEX1 acts as a negative regulator of transcription. In association with NAA15, the XRCC5-XRRC6 dimer binds to the osteocalcin promoter and activates osteocalcin expression. As part of the DNA-PK complex, involved in the early steps of ribosome assembly by promoting the processing of precursor rRNA into mature 18S rRNA in the small-subunit processome. Binding to U3 small nucleolar RNA, recruits PRKDC and XRCC5/Ku86 to the small-subunit processome. Plays a role in the regulation of DNA virus-mediated innate immune response by assembling into the HDP-RNP complex, a complex that serves as a platform for IRF3 phosphorylation and subsequent innate immune response activation through the cGAS-STING pathway. The sequence is that of X-ray repair cross-complementing protein 5 (Xrcc5) from Mus musculus (Mouse).